The following is a 299-amino-acid chain: Fibrinogen silencer-binding protein (299 aa).

A Glycyl lysine isopeptide (Lys-Gly) (interchain with G-Cter in SUMO2) cross-link involves residue Lys-94. The interval 189–211 is disordered; that stretch reads EGSESPSLSSVDMRMTSSPSSVP. A compositionally biased stretch (polar residues) spans 192 to 209; that stretch reads ESPSLSSVDMRMTSSPSS.

As to quaternary structure, interacts with APBA1 (via PDZ 1 and 2 domains).

Its subcellular location is the nucleus. Functionally, transcriptional repressor that down-regulates the expression of the fibrinogen gamma chain. Represses transcription of GSK3B gene promoter via its interaction with APBA1. The protein is Fibrinogen silencer-binding protein (Fsbp) of Mus musculus (Mouse).